The following is a 662-amino-acid chain: Probable quinol oxidase subunit 1 (662 aa).

The next 2 membrane-spanning stretches (helical) occupy residues 14–34 (WMIT…IAVI) and 58–78 (IMYL…ALLI). Histidine 102 contacts Fe(II)-heme a. 8 helical membrane-spanning segments follow: residues 103–123 (GVIM…NIVV), 140–160 (VSFW…IIGG), 187–207 (IAIQ…FVTI), 228–248 (FITT…LALM), 273–293 (FFWV…FGIY), 311–331 (MVWA…HHFF), 336–356 (GALI…PTGV), and 376–396 (MLFS…GVML). Residues histidine 279, tyrosine 283, histidine 328, and histidine 329 each coordinate Cu cation. The segment at residues 279 to 283 (HPEVY) is a cross-link (1'-histidyl-3'-tyrosine (His-Tyr)). Residue histidine 414 coordinates heme a3. Transmembrane regions (helical) follow at residues 415–435 (FHYT…IFWY), 451–471 (CFWF…ILGL), 493–513 (ISTI…VSIV), 587–604 (PVGF…FFLI), and 608–627 (VIPA…YRSF). Residue histidine 416 participates in Fe(II)-heme a binding.

The protein belongs to the heme-copper respiratory oxidase family. Requires Cu cation as cofactor. It depends on ferriheme a as a cofactor. Heme A3. serves as cofactor.

It is found in the cell membrane. It catalyses the reaction 2 a quinol + O2 = 2 a quinone + 2 H2O. It functions in the pathway energy metabolism; oxidative phosphorylation. Catalyzes quinol oxidation with the concomitant reduction of oxygen to water. The protein is Probable quinol oxidase subunit 1 (qoxB) of Staphylococcus aureus (strain USA300).